We begin with the raw amino-acid sequence, 376 residues long: Gibberellic acid methyltransferase 1 (376 aa).

S-adenosyl-L-homocysteine contacts are provided by Tyr22, Cys64, Asn69, Asp104, Leu105, Ser136, and Phe137. Trp158 lines the gibberellin A9 pocket. Mg(2+) contacts are provided by Asn175, Val179, Arg265, Asp266, Phe268, and Asn269.

This sequence belongs to the methyltransferase superfamily. Type-7 methyltransferase family. SABATH subfamily. It depends on Mg(2+) as a cofactor. As to expression, expressed in siliques, developing seeds, anthers and germinating seeds. Not detected in leaves, stems, flowers and roots.

It carries out the reaction gibberellin A9 + S-adenosyl-L-methionine = O-methyl gibberellin A9 + S-adenosyl-L-homocysteine. Up-regulated by K(+) and NH(4+), down-regulated by Zn(2+), Cu(2+), Fe(2+) and Fe(3+). In terms of biological role, methylates the carboxyl group of several gibberellins (GAs). Substrate preference is GA9 &gt; GA20 &gt; GA3 &gt; GA4 &gt; GA34 &gt; GA51 &gt; GA1 &gt; GA19 &gt; GA12. No activity with diterpenes abietic acid and ent-kaurenoic acid. The protein is Gibberellic acid methyltransferase 1 (GAMT1) of Arabidopsis thaliana (Mouse-ear cress).